The sequence spans 416 residues: Tyrosine--tRNA ligase (416 aa).

Position 40 (Tyr40) interacts with L-tyrosine. The 'HIGH' region signature appears at 45-54; that stretch reads ATAASLHVGH. The L-tyrosine site is built by Tyr177 and Gln181. The 'KMSKS' region motif lies at 237–241; it reads KMGKS. Residue Lys240 participates in ATP binding. The S4 RNA-binding domain occupies 351–416; that stretch reads LSVAHFLVAA…RKKHKLVRLS (66 aa).

The protein belongs to the class-I aminoacyl-tRNA synthetase family. TyrS type 1 subfamily. Homodimer.

It is found in the cytoplasm. It catalyses the reaction tRNA(Tyr) + L-tyrosine + ATP = L-tyrosyl-tRNA(Tyr) + AMP + diphosphate + H(+). Functionally, catalyzes the attachment of tyrosine to tRNA(Tyr) in a two-step reaction: tyrosine is first activated by ATP to form Tyr-AMP and then transferred to the acceptor end of tRNA(Tyr). The polypeptide is Tyrosine--tRNA ligase (Cereibacter sphaeroides (strain KD131 / KCTC 12085) (Rhodobacter sphaeroides)).